We begin with the raw amino-acid sequence, 512 residues long: Histidine ammonia-lyase (512 aa).

The segment at residues 145 to 147 (ASG) is a cross-link (5-imidazolinone (Ala-Gly)). Position 146 is a 2,3-didehydroalanine (Ser) (Ser-146).

The protein belongs to the PAL/histidase family. In terms of processing, contains an active site 4-methylidene-imidazol-5-one (MIO), which is formed autocatalytically by cyclization and dehydration of residues Ala-Ser-Gly.

It is found in the cytoplasm. It catalyses the reaction L-histidine = trans-urocanate + NH4(+). Its pathway is amino-acid degradation; L-histidine degradation into L-glutamate; N-formimidoyl-L-glutamate from L-histidine: step 1/3. This Pseudomonas fluorescens (strain SBW25) protein is Histidine ammonia-lyase.